The following is a 466-amino-acid chain: Arginine biosynthesis bifunctional protein ArgJ, mitochondrial (466 aa).

The substrate site is built by Thr-194, Lys-223, Thr-234, Glu-321, Asn-461, and Thr-466. Residue Thr-234 is the Nucleophile of the active site.

The protein belongs to the ArgJ family. Heterodimer of an alpha and a beta chain. Post-translationally, the alpha and beta chains are autoproteolytically processed from a single precursor protein within the mitochondrion.

It localises to the mitochondrion matrix. It catalyses the reaction N(2)-acetyl-L-ornithine + L-glutamate = N-acetyl-L-glutamate + L-ornithine. The enzyme catalyses L-glutamate + acetyl-CoA = N-acetyl-L-glutamate + CoA + H(+). Its pathway is amino-acid biosynthesis; L-arginine biosynthesis; L-ornithine and N-acetyl-L-glutamate from L-glutamate and N(2)-acetyl-L-ornithine (cyclic): step 1/1. It participates in amino-acid biosynthesis; L-arginine biosynthesis; N(2)-acetyl-L-ornithine from L-glutamate: step 1/4. Its function is as follows. Catalyzes two activities which are involved in the cyclic version of arginine biosynthesis: the synthesis of acetylglutamate from glutamate and acetyl-CoA, and of ornithine by transacetylation between acetylornithine and glutamate. This is Arginine biosynthesis bifunctional protein ArgJ, mitochondrial from Aspergillus fumigatus (strain ATCC MYA-4609 / CBS 101355 / FGSC A1100 / Af293) (Neosartorya fumigata).